The chain runs to 101 residues: MSVSAAVDQYTVLTGDRSKIKDLLCSRLTECGWRDEVRLMCRNILLEKGTNNSFTVEQLITEVTPKARTLVPDAIKKELLMKIRTILTENEEEADEPEDES.

It belongs to the ENY2 family. As to quaternary structure, component of the nuclear pore complex (NPC)-associated AMEX complex (anchoring and mRNA export complex), composed of at least e(y)2 and xmas-2. Component of the SAGA transcription coactivator-HAT complexes, at least composed of Ada2b, e(y)2, Pcaf/Gcn5, Taf10 and Nipped-A/Trrap. Within the SAGA complex, e(y)2, Sgf11, and not/nonstop form an additional subcomplex of SAGA called the DUB module (deubiquitination module). Component of the THO complex, composed of at least e(y)2, HPR1, THO2, THOC5, THOC6 and THOC7. Interacts with e(y)1. Interacts with su(Hw) (via zinc fingers). Interacts with xmas-2; required for localization to the nuclear periphery. Interacts with the nuclear pore complex (NPC).

Its subcellular location is the nucleus. It localises to the nucleoplasm. The protein localises to the cytoplasm. Functionally, involved in mRNA export coupled transcription activation by association with both the AMEX and the SAGA complexes. The SAGA complex is a multiprotein complex that activates transcription by remodeling chromatin and mediating histone acetylation and deubiquitination. Within the SAGA complex, participates in a subcomplex that specifically deubiquitinates histone H2B. The SAGA complex is recruited to specific gene promoters by activators, where it is required for transcription. Required for nuclear receptor-mediated transactivation. Involved in transcription elongation by recruiting the THO complex onto nascent mRNA. The AMEX complex functions in docking export-competent ribonucleoprotein particles (mRNPs) to the nuclear entrance of the nuclear pore complex (nuclear basket). AMEX participates in mRNA export and accurate chromatin positioning in the nucleus by tethering genes to the nuclear periphery. The chain is Enhancer of yellow 2 transcription factor from Drosophila erecta (Fruit fly).